Consider the following 328-residue polypeptide: HTH-type transcriptional regulator MalR (328 aa).

The HTH lacI-type domain occupies 2–57 (PVTIKDVAKAAGVSPSTVTRVIQNKSTISDETKKRVRKAMKELNYHPNLNARSLVS). The H-T-H motif DNA-binding region spans 5–24 (IKDVAKAAGVSPSTVTRVIQ). The interval 173 to 218 (TEYFIKKGCKRIAFIGGSKKLFVTKDRLTGYEQALKHYKLTTDNNR) is inducer binding. A dimerization region spans residues 282–291 (NLAAYVDINS).

Functionally, transcriptional repressor of the maltosaccharide utilization operons malxCD and malMP. The polypeptide is HTH-type transcriptional regulator MalR (malR) (Streptococcus pneumoniae serotype 4 (strain ATCC BAA-334 / TIGR4)).